We begin with the raw amino-acid sequence, 723 residues long: Pentatricopeptide repeat-containing protein At5g50280, chloroplastic (723 aa).

The N-terminal 44 residues, 1-44, are a transit peptide targeting the chloroplast; it reads MSMASSSLATQSFFSSFPLSHRLHFPVPYLLLRSSFFRKPLSLS. The segment at 70-97 is disordered; the sequence is IQQPENSTINSEESECEEEDDEEGDDFT. Positions 81-97 are enriched in acidic residues; the sequence is EESECEEEDDEEGDDFT. 11 PPR repeats span residues 272–306, 307–342, 343–377, 378–412, 413–447, 448–483, 484–518, 519–553, 554–588, 589–623, and 624–658; these read DVRLYNAAISGLSASQRYDDAWEVYEAMDKINVYP, DNVTCAILITTLRKAGRSAKEVWEIFEKMSEKGVKW, SQDVFGGLVKSFCDEGLKEEALVIQTEMEKKGIRS, NTIVYNTLMDAYNKSNHIEEVEGLFTEMRDKGLKP, SAATYNILMDAYARRMQPDIVETLLREMEDLGLEP, NVKSYTCLISAYGRTKKMSDMAADAFLRMKKVGLKP, SSHSYTALIHAYSVSGWHEKAYASFEEMCKEGIKP, SVETYTSVLDAFRRSGDTGKLMEIWKLMLREKIKG, TRITYNTLLDGFAKQGLYIEARDVVSEFSKMGLQP, SVMTYNMLMNAYARGGQDAKLPQLLKEMAALNLKP, and DSITYSTMIYAFVRVRDFKRAFFYHKMMVKSGQVP. The segment at 700 to 723 is disordered; that stretch reads TKGKKDEFWKYKTNRTTSPGRHRS. Residues 713 to 723 show a composition bias toward polar residues; the sequence is NRTTSPGRHRS.

The protein belongs to the PPR family. P subfamily.

The protein resides in the plastid. It is found in the chloroplast. This Arabidopsis thaliana (Mouse-ear cress) protein is Pentatricopeptide repeat-containing protein At5g50280, chloroplastic (EMB1006).